Consider the following 312-residue polypeptide: Deoxycytidylate deaminase (312 aa).

Residues 162–291 (SWDSYFMKLA…RMDEESFKVL (130 aa)) enclose the CMP/dCMP-type deaminase domain. His-233 is a Zn(2+) binding site. The Proton donor role is filled by Glu-235. Cys-260 and Cys-263 together coordinate Zn(2+).

Belongs to the cytidine and deoxycytidylate deaminase family. Zn(2+) is required as a cofactor.

It catalyses the reaction dCMP + H2O + H(+) = dUMP + NH4(+). Allosteric enzyme whose activity is greatly influenced by the end products of its metabolic pathway, dCTP and dTTP. Catalyzes the hydrolytic deamination of dCMP to yield dUMP, the nucleotide substrate for thymidylate synthetase. This Saccharomyces cerevisiae (strain ATCC 204508 / S288c) (Baker's yeast) protein is Deoxycytidylate deaminase.